The sequence spans 153 residues: Large-conductance mechanosensitive channel (153 aa).

The next 2 helical transmembrane spans lie at 16–36 (VIDL…VKSL) and 88–108 (GLFI…FMLV).

The protein belongs to the MscL family. In terms of assembly, homopentamer.

The protein localises to the cell inner membrane. Its function is as follows. Channel that opens in response to stretch forces in the membrane lipid bilayer. May participate in the regulation of osmotic pressure changes within the cell. This is Large-conductance mechanosensitive channel from Chromobacterium violaceum (strain ATCC 12472 / DSM 30191 / JCM 1249 / CCUG 213 / NBRC 12614 / NCIMB 9131 / NCTC 9757 / MK).